A 128-amino-acid chain; its full sequence is Glycine cleavage system H protein (128 aa).

Residues 24 to 106 (LVRIGISEFA…HGEGWLLIIR (83 aa)) enclose the Lipoyl-binding domain. Lys65 is modified (N6-lipoyllysine).

It belongs to the GcvH family. The glycine cleavage system is composed of four proteins: P, T, L and H. It depends on (R)-lipoate as a cofactor.

Its function is as follows. The glycine cleavage system catalyzes the degradation of glycine. The H protein shuttles the methylamine group of glycine from the P protein to the T protein. The polypeptide is Glycine cleavage system H protein (Prochlorococcus marinus (strain NATL1A)).